The primary structure comprises 383 residues: V-type proton ATPase subunit C 1-A (383 aa).

Residue T2 is modified to N-acetylthreonine.

This sequence belongs to the V-ATPase C subunit family. In terms of assembly, V-ATPase is a heteromultimeric enzyme made up of two complexes: the ATP-hydrolytic V1 complex and the proton translocation V0 complex. The V1 complex consists of three catalytic AB heterodimers that form a heterohexamer, three peripheral stalks each consisting of EG heterodimers, one central rotor including subunits D and F, and the regulatory subunits C and H. The proton translocation complex V0 consists of the proton transport subunit a, a ring of proteolipid subunits c9c'', rotary subunit d, subunits e and f, and two accessory subunits.

Its function is as follows. Subunit of the V1 complex of vacuolar(H+)-ATPase (V-ATPase), a multisubunit enzyme composed of a peripheral complex (V1) that hydrolyzes ATP and a membrane integral complex (V0) that translocates protons. V-ATPase is responsible for acidifying and maintaining the pH of intracellular compartments and in some cell types, is targeted to the plasma membrane, where it is responsible for acidifying the extracellular environment. Subunit C is necessary for the assembly of the catalytic sector of the enzyme and is likely to have a specific function in its catalytic activity. This Danio rerio (Zebrafish) protein is V-type proton ATPase subunit C 1-A (atp6v1c1a).